We begin with the raw amino-acid sequence, 2345 residues long: Nonribisomal peptide synthetase malG (2345 aa).

The adenylation 1 stretch occupies residues 226 to 620 (FSEQAKKNPT…VGRMGTVVKV (395 aa)). The Carrier 1 domain maps to 766–839 (TENETLLRLL…EAAGTMISAG (74 aa)). An O-(pantetheine 4'-phosphoryl)serine modification is found at serine 800. The interval 877 to 1292 (EEIYPSTPLQ…LLCPSDKSKL (416 aa)) is condensation 1. Residues 1317–1707 (VRSERTAVSA…GRKNREVKLR (391 aa)) form an adenylation 2 region. One can recognise a Carrier 2 domain in the interval 1843–1926 (QPHESTALFV…DIARLIEGVK (84 aa)). Serine 1885 carries the post-translational modification O-(pantetheine 4'-phosphoryl)serine. The tract at residues 1969–2256 (GMSVFLTGGT…PRQLNALQSE (288 aa)) is reductase (R) domain.

The protein belongs to the NRP synthetase family.

The enzyme catalyses L-proline + L-tryptophan + 2 ATP + NADPH = (S)-3-(indol-3-ylmethyl)-6,7,8,8a-tetrahydropyrrolo[1,2-a]pyrazin-1-one + 2 AMP + 2 diphosphate + NADP(+) + H2O + H(+). Its function is as follows. Nonribisomal peptide synthetase; part of the gene cluster that mediates the biosynthesis of malbrancheamide, a dichlorinated fungal indole alkaloid that belongs to a family of natural products containing a characteristic bicyclo[2.2.2]diazaoctane core. The first step of malbrancheamide biosynthesis involves coupling of L-proline and L-tryptophan by malG, a bimodular NRPS, to produce L-Pro-L-Trp aldehyde through reductive offloading. This compound undergoes spontaneous cyclization and dehydration to give a dienamine which is reverse prenylated at C-2 by malE. The other prenyltransferase present in the cluster, malB, displays modest activity, suggesting that may be a redundant gene in the pathway. Subsequently, a [4+2] Diels-Alder cyclo-addition catalyzed by the bifunctional enzyme malC forms the characteristic bicyclo[2.2.2]diazaoctane ring of premalbrancheamid. Finally, the flavin-dependent halogenase malA catalyzes the iterative dichlorination of the indole ring of premalbrancheamide to yield C-9 monochlorinated malbrancheamide B, C-8 monochlorinated isomalbrancheamide B, and dichlorinated malbrancheamide. MalA is also able to brominate premalbrancheamide at C-9 to yield malbrancheamide C, and, to a lesser extend, at C-8 to yield isomalbrancheamide C. Finally, malA can brominate C-9 monochlorinated malbrancheamide B at C-8 to yield malbrancheamide D, or C-8 monochlorinated isomalbrancheamide B at C-9 to produce isomalbrancheamide D. In Malbranchea aurantiaca, this protein is Nonribisomal peptide synthetase malG.